Here is a 415-residue protein sequence, read N- to C-terminus: Arginine biosynthesis bifunctional protein ArgJ (415 aa).

Thr-156, Lys-182, Thr-193, Glu-279, Asn-410, and Thr-415 together coordinate substrate. Catalysis depends on Thr-193, which acts as the Nucleophile.

It belongs to the ArgJ family. As to quaternary structure, heterotetramer of two alpha and two beta chains.

It localises to the cytoplasm. It carries out the reaction N(2)-acetyl-L-ornithine + L-glutamate = N-acetyl-L-glutamate + L-ornithine. The catalysed reaction is L-glutamate + acetyl-CoA = N-acetyl-L-glutamate + CoA + H(+). It functions in the pathway amino-acid biosynthesis; L-arginine biosynthesis; L-ornithine and N-acetyl-L-glutamate from L-glutamate and N(2)-acetyl-L-ornithine (cyclic): step 1/1. It participates in amino-acid biosynthesis; L-arginine biosynthesis; N(2)-acetyl-L-ornithine from L-glutamate: step 1/4. In terms of biological role, catalyzes two activities which are involved in the cyclic version of arginine biosynthesis: the synthesis of N-acetylglutamate from glutamate and acetyl-CoA as the acetyl donor, and of ornithine by transacetylation between N(2)-acetylornithine and glutamate. In Synechococcus sp. (strain ATCC 27144 / PCC 6301 / SAUG 1402/1) (Anacystis nidulans), this protein is Arginine biosynthesis bifunctional protein ArgJ.